Consider the following 200-residue polypeptide: Ribonuclease HII (200 aa).

An RNase H type-2 domain is found at 6 to 200 (ESIAGVDEVG…KLFAVHGSLT (195 aa)). Asp12, Glu13, and Asp108 together coordinate a divalent metal cation.

It belongs to the RNase HII family. The cofactor is Mn(2+). Mg(2+) serves as cofactor.

Its subcellular location is the cytoplasm. The catalysed reaction is Endonucleolytic cleavage to 5'-phosphomonoester.. Its function is as follows. Endonuclease that specifically degrades the RNA of RNA-DNA hybrids. This Prochlorococcus marinus (strain MIT 9303) protein is Ribonuclease HII.